The primary structure comprises 31 residues: Photosystem II reaction center protein T (31 aa).

The helical transmembrane segment at 3–23 (SFAYVLILTLAIATLFFAIAF) threads the bilayer.

This sequence belongs to the PsbT family. PSII is composed of 1 copy each of membrane proteins PsbA, PsbB, PsbC, PsbD, PsbE, PsbF, PsbH, PsbI, PsbJ, PsbK, PsbL, PsbM, PsbT, PsbX, PsbY, PsbZ, Psb30/Ycf12, peripheral proteins PsbO, CyanoQ (PsbQ), PsbU, PsbV and a large number of cofactors. It forms dimeric complexes.

It localises to the cellular thylakoid membrane. Functionally, found at the monomer-monomer interface of the photosystem II (PS II) dimer, plays a role in assembly and dimerization of PSII. PSII is a light-driven water plastoquinone oxidoreductase, using light energy to abstract electrons from H(2)O, generating a proton gradient subsequently used for ATP formation. The chain is Photosystem II reaction center protein T from Parasynechococcus marenigrum (strain WH8102).